The following is an 834-amino-acid chain: Striatin-interacting protein 2 (834 aa).

Residues 1–48 (MEDPAAPGTGGPPANGNGNGGGKGKQAAPKGREAFRSQRRESEGSVDC) form a disordered region. Over residues 8 to 24 (GTGGPPANGNGNGGGKG) the composition is skewed to gly residues. Positions 30-43 (KGREAFRSQRRESE) are enriched in basic and acidic residues. Residues Ser318, Ser329, and Ser354 each carry the phosphoserine modification. Positions 321 to 345 (SYTLDLGESQLAPPPSKLRGRRGSR) are disordered. Residues 360-382 (ERDLFKTEEPATEEEEESAGDGE) are disordered. Over residues 369–379 (PATEEEEESAG) the composition is skewed to acidic residues.

It belongs to the STRIP family. As to quaternary structure, part of the core of STRIPAK complexes composed of PP2A catalytic and scaffolding subunits, the striatins (PP2A regulatory subunits), the striatin-associated proteins MOB4, STRIP1 and STRIP2, PDCD10 and members of the STE20 kinases, such as STK24 and STK26. Interacts with CTTNBP2NL.

The protein resides in the cytoplasm. In terms of biological role, plays a role in the regulation of cell morphology and cytoskeletal organization. Required in the control of cell shape. Calmodulin-binding scaffolding protein which is the center of the striatin-interacting phosphatase and kinase (STRIPAK) complexes. STRIPAK complexes have critical roles in protein (de)phosphorylation and are regulators of multiple signaling pathways including Hippo, MAPK, nuclear receptor and cytoskeleton remodeling. Different types of STRIPAK complexes are involved in a variety of biological processes such as cell growth, differentiation, apoptosis, metabolism and immune regulation. This chain is Striatin-interacting protein 2, found in Homo sapiens (Human).